The chain runs to 308 residues: Isoflavone reductase-like protein (308 aa).

NADP(+)-binding positions include 11 to 17 (GGTGYIG), Arg36, and Lys45. Lys133 functions as the Proton acceptor in the catalytic mechanism. Arg137 contributes to the NADP(+) binding site.

This sequence belongs to the NmrA-type oxidoreductase family. Isoflavone reductase subfamily. As to quaternary structure, homodimer.

It is found in the cytoplasm. The chain is Isoflavone reductase-like protein from Olea europaea (Common olive).